We begin with the raw amino-acid sequence, 150 residues long: UPF0260 protein CGSHiGG_00425 (150 aa).

This sequence belongs to the UPF0260 family.

In Haemophilus influenzae (strain PittGG), this protein is UPF0260 protein CGSHiGG_00425.